A 346-amino-acid chain; its full sequence is Protein RecA (346 aa).

An ATP-binding site is contributed by 67-74; it reads GPESSGKT.

Belongs to the RecA family.

It is found in the cytoplasm. Its function is as follows. Can catalyze the hydrolysis of ATP in the presence of single-stranded DNA, the ATP-dependent uptake of single-stranded DNA by duplex DNA, and the ATP-dependent hybridization of homologous single-stranded DNAs. It interacts with LexA causing its activation and leading to its autocatalytic cleavage. In Mycobacteroides abscessus (strain ATCC 19977 / DSM 44196 / CCUG 20993 / CIP 104536 / JCM 13569 / NCTC 13031 / TMC 1543 / L948) (Mycobacterium abscessus), this protein is Protein RecA.